Consider the following 479-residue polypeptide: Calcium/calmodulin-dependent protein kinase type II delta chain (479 aa).

The 259-residue stretch at 14-272 (YQLFEELGKG…ASEALKHPWI (259 aa)) folds into the Protein kinase domain. ATP is bound by residues 20 to 28 (LGKGAFSVV) and K43. Residue D136 is the Proton acceptor of the active site. At T287 the chain carries Phosphothreonine. Residues S315 and S319 each carry the phosphoserine modification. T337 carries the phosphothreonine modification.

It belongs to the protein kinase superfamily. CAMK Ser/Thr protein kinase family. CaMK subfamily. CAMK2 is composed of four different chains: alpha, beta, gamma, and delta. The different isoforms assemble into homo- or heteromultimeric holoenzymes composed of 8 to 12 subunits.

The enzyme catalyses L-seryl-[protein] + ATP = O-phospho-L-seryl-[protein] + ADP + H(+). It carries out the reaction L-threonyl-[protein] + ATP = O-phospho-L-threonyl-[protein] + ADP + H(+). With respect to regulation, autophosphorylation of CAMK2 plays an important role in the regulation of the kinase activity. Functionally, caM-kinase II (CAMK2) is a prominent kinase in the central nervous system. The sequence is that of Calcium/calmodulin-dependent protein kinase type II delta chain (CAMK2D) from Gallus gallus (Chicken).